A 691-amino-acid chain; its full sequence is Mediator of RNA polymerase II transcription subunit 17 (691 aa).

Positions 158–185 (KLESFDAAANKLLQSAQRLEEDIAAETK) form a coiled coil.

The protein belongs to the Mediator complex subunit 17 family. As to quaternary structure, component of the Mediator complex.

It is found in the nucleus. In terms of biological role, component of the Mediator complex, a coactivator involved in the regulated transcription of nearly all RNA polymerase II-dependent genes. Mediator functions as a bridge to convey information from gene-specific regulatory proteins to the basal RNA polymerase II transcription machinery. Mediator is recruited to promoters by direct interactions with regulatory proteins and serves as a scaffold for the assembly of a functional preinitiation complex with RNA polymerase II and the general transcription factors. The chain is Mediator of RNA polymerase II transcription subunit 17 (SRB4) from Coccidioides immitis (strain RS) (Valley fever fungus).